We begin with the raw amino-acid sequence, 427 residues long: 3-isopropylmalate dehydratase large subunit (427 aa).

Residues Cys308, Cys368, and Cys371 each contribute to the [4Fe-4S] cluster site.

It belongs to the aconitase/IPM isomerase family. LeuC type 2 subfamily. Heterodimer of LeuC and LeuD. [4Fe-4S] cluster serves as cofactor.

It catalyses the reaction (2R,3S)-3-isopropylmalate = (2S)-2-isopropylmalate. It participates in amino-acid biosynthesis; L-leucine biosynthesis; L-leucine from 3-methyl-2-oxobutanoate: step 2/4. Functionally, catalyzes the isomerization between 2-isopropylmalate and 3-isopropylmalate, via the formation of 2-isopropylmaleate. This Geotalea uraniireducens (strain Rf4) (Geobacter uraniireducens) protein is 3-isopropylmalate dehydratase large subunit.